Here is a 222-residue protein sequence, read N- to C-terminus: UPF0502 protein XCC4136 (222 aa).

The protein belongs to the UPF0502 family.

This Xanthomonas campestris pv. campestris (strain ATCC 33913 / DSM 3586 / NCPPB 528 / LMG 568 / P 25) protein is UPF0502 protein XCC4136.